A 510-amino-acid chain; its full sequence is NAD(P)H-quinone oxidoreductase subunit 2 B, chloroplastic (510 aa).

The next 13 helical transmembrane spans lie at 24–44 (LLLFHGSFIFPECILIFGLIL), 57–77 (IPWLYFISSTSLVMSITALLF), 99–119 (IFQFLILLCSTLCIPLSVEYI), 124–144 (MAITEFLLFVLTATLGGMFLC), 150–170 (ITIFVAPECFSLCSYLLSGYT), 183–203 (YLLMGGASSSILVHGFSWLYG), 227–247 (PGISIALIFITVGIGFKLSPA), 295–315 (WHLLLEILAILSMILGNLIAI), 323–343 (MLAYSSIGQIGYVIIGIIVGD), 347–367 (GYASMITYMLFYISMNLGTFA), 395–415 (ALSSALCLLSLGGLPPLAGFF), 418–438 (LHLFWCGWQAGLYFLVSIGLL), and 484–504 (MIVCVIASTIPGISMNPIIAI).

Belongs to the complex I subunit 2 family. NDH is composed of at least 16 different subunits, 5 of which are encoded in the nucleus.

The protein resides in the plastid. The protein localises to the chloroplast thylakoid membrane. It catalyses the reaction a plastoquinone + NADH + (n+1) H(+)(in) = a plastoquinol + NAD(+) + n H(+)(out). It carries out the reaction a plastoquinone + NADPH + (n+1) H(+)(in) = a plastoquinol + NADP(+) + n H(+)(out). In terms of biological role, NDH shuttles electrons from NAD(P)H:plastoquinone, via FMN and iron-sulfur (Fe-S) centers, to quinones in the photosynthetic chain and possibly in a chloroplast respiratory chain. The immediate electron acceptor for the enzyme in this species is believed to be plastoquinone. Couples the redox reaction to proton translocation, and thus conserves the redox energy in a proton gradient. The chain is NAD(P)H-quinone oxidoreductase subunit 2 B, chloroplastic from Liriodendron tulipifera (Tuliptree).